Here is a 363-residue protein sequence, read N- to C-terminus: MVYTTPQQQQRFSSTPQSSHTLIFSPIRAPSMQTPSSLDYQSPSIVVSSSSMKVHGRSSSFGKFSLSIGQNGKATILGPINVLPTDTSKMEKPVPKKKPVTSDRVEKTRILSLLKKMRNKSSTVNKKYSKVPLKSTTSLQPAATAPSPLVSNIIKPSPKKLASPRTPNANSNLNLNFTSFQIKTGFTPNLDGILLENFTSPNTTADSQGNSASNIINNNHGSANNTNQFLFNLPLQSSPRQFRSPARLIDPLPISDWNTSLLMSPPRTTNFESANNHFNSNFAQASMLRRPSLPHIDEVIPQDSNPANYSDRSDYLSVDQNANNHNGALSEQTYNNIMKSSMISLPIEKDDATMALRKLVSRE.

The segment at 1–20 (MVYTTPQQQQRFSSTPQSSH) is disordered. 2 positions are modified to phosphoserine: S157 and S292.

In terms of assembly, interacts with transcription complexes SCB-binding factor (SBF) and MCB-binding factor (MBF). Interacts with SWI4.

The polypeptide is Putative transcriptional activator MSA2 (MSA2) (Saccharomyces cerevisiae (strain ATCC 204508 / S288c) (Baker's yeast)).